The following is a 394-amino-acid chain: Elongation factor Tu (394 aa).

Positions 10 to 204 (KPHVNIGTIG…AVDSYIPQPV (195 aa)) constitute a tr-type G domain. A G1 region spans residues 19–26 (GHVDHGKT). Residue 19-26 (GHVDHGKT) participates in GTP binding. Thr26 is a binding site for Mg(2+). The G2 stretch occupies residues 60–64 (GITIS). Residues 81–84 (DCPG) are G3. Residues 81 to 85 (DCPGH) and 136 to 139 (NKVD) contribute to the GTP site. The segment at 136–139 (NKVD) is G4. Positions 174-176 (SAL) are G5.

It belongs to the TRAFAC class translation factor GTPase superfamily. Classic translation factor GTPase family. EF-Tu/EF-1A subfamily. In terms of assembly, monomer.

The protein resides in the cytoplasm. The catalysed reaction is GTP + H2O = GDP + phosphate + H(+). Functionally, GTP hydrolase that promotes the GTP-dependent binding of aminoacyl-tRNA to the A-site of ribosomes during protein biosynthesis. This Rickettsia montanensis protein is Elongation factor Tu.